The following is a 79-amino-acid chain: U-actitoxin-Bgr3d (79 aa).

A signal peptide spans 1 to 21 (MSYERLLCLVLVASFIAASVA). A propeptide spanning residues 22–38 (QHPGDAPRMEDDSSAIQ) is cleaved from the precursor. Cystine bridges form between cysteine 44/cysteine 76, cysteine 46/cysteine 69, and cysteine 59/cysteine 77.

The protein belongs to the sea anemone type 3 (BDS) potassium channel toxin family.

The protein resides in the secreted. It localises to the nematocyst. Its function is as follows. Potently and selectively inhibits voltage-gated potassium channels Kv11/KCNH/ERG. Acts as a gating-modifier toxin that shifts the voltage-dependence of ERG activation in the positive direction and suppresses its current amplitudes elicited by strong depolarizing pulses that maximally activate the channels. The polypeptide is U-actitoxin-Bgr3d (Bunodosoma granuliferum (Red warty sea anemone)).